Here is a 709-residue protein sequence, read N- to C-terminus: Molybdenum cofactor sulfurase (709 aa).

Position 208 is an N6-(pyridoxal phosphate)lysine (Lys208). Cys367 is a catalytic residue. The MOSC domain maps to 563–707; sequence DNALDRQNCR…LESGMSVNFS (145 aa).

This sequence belongs to the class-V pyridoxal-phosphate-dependent aminotransferase family. MOCOS subfamily. The cofactor is pyridoxal 5'-phosphate.

The catalysed reaction is Mo-molybdopterin + L-cysteine + AH2 = thio-Mo-molybdopterin + L-alanine + A + H2O. It participates in cofactor biosynthesis; molybdopterin biosynthesis. Functionally, sulfurates the molybdenum cofactor. Sulfation of molybdenum is essential for xanthine dehydrogenase (XDH) and aldehyde oxidase (ADO) enzymes in which molybdenum cofactor is liganded by 1 oxygen and 1 sulfur atom in active form. The protein is Molybdenum cofactor sulfurase of Caenorhabditis elegans.